A 378-amino-acid chain; its full sequence is Gibberellin 20 oxidase 2 (378 aa).

Residues 1–10 (MAILCTTTSP) show a composition bias toward polar residues. The tract at residues 1 to 26 (MAILCTTTSPAEKEHEPKQDLEKDQT) is disordered. The span at 11–25 (AEKEHEPKQDLEKDQ) shows a compositional bias: basic and acidic residues. A Fe2OG dioxygenase domain is found at 220–320 (ENDSIMRLNH…RKSMAFFLCP (101 aa)). Residues H245, D247, and H301 each contribute to the Fe cation site. The active site involves R311.

The protein belongs to the iron/ascorbate-dependent oxidoreductase family. GA20OX subfamily. Fe(2+) is required as a cofactor. The cofactor is L-ascorbate. Expressed in inflorescence and developing siliques. Detected in seeds, roots, cotyledons and leaves. In seeds, specifically detected at the rim of the embryo and the outer integument.

The enzyme catalyses gibberellin A12 + 2 2-oxoglutarate + 3 O2 + H(+) = gibberellin A9 + 2 succinate + 3 CO2 + 2 H2O. It catalyses the reaction gibberellin A12 + 2-oxoglutarate + O2 = gibberellin A15 + succinate + CO2. It carries out the reaction gibberellin A15 + 2-oxoglutarate + O2 = gibberellin A24 + succinate + CO2 + H2O. The catalysed reaction is gibberellin A53 + 2-oxoglutarate + O2 = gibberellin A44 + succinate + CO2. The enzyme catalyses gibberellin A12 + 3 2-oxoglutarate + 3 O2 = gibberellin A25 + 3 succinate + 3 CO2 + H2O + H(+). Its pathway is plant hormone biosynthesis; gibberellin biosynthesis. Functionally, key oxidase enzyme in the biosynthesis of gibberellin that catalyzes the conversion of GA12 to GA9, via a three-step oxidation at C-20 of the GA skeleton, and GA25 is also formed as a minor product. GA53 is less effectively oxidized than GA12 and is only oxidized one step to GA44. Involved in the promotion of the floral transition, fertility and silique elongation, but plays only a minor role in elongation of seedling organs. Acts redundantly with GA20OX1. In Arabidopsis thaliana (Mouse-ear cress), this protein is Gibberellin 20 oxidase 2 (GA20OX2).